A 735-amino-acid polypeptide reads, in one-letter code: Phosphoribosylformylglycinamidine synthase subunit PurL (735 aa).

His49 is an active-site residue. The ATP site is built by Tyr52 and Lys91. Glu93 provides a ligand contact to Mg(2+). Substrate-binding positions include 94–97 and Arg116; that span reads SHNH. Catalysis depends on His95, which acts as the Proton acceptor. Mg(2+) is bound at residue Asp117. Gln240 contacts substrate. Asp268 is a Mg(2+) binding site. 312 to 314 is a binding site for substrate; it reads ESQ. 2 residues coordinate ATP: Asp493 and Gly530. Asn531 lines the Mg(2+) pocket. Ser533 lines the substrate pocket.

It belongs to the FGAMS family. As to quaternary structure, monomer. Part of the FGAM synthase complex composed of 1 PurL, 1 PurQ and 2 PurS subunits.

It is found in the cytoplasm. The catalysed reaction is N(2)-formyl-N(1)-(5-phospho-beta-D-ribosyl)glycinamide + L-glutamine + ATP + H2O = 2-formamido-N(1)-(5-O-phospho-beta-D-ribosyl)acetamidine + L-glutamate + ADP + phosphate + H(+). Its pathway is purine metabolism; IMP biosynthesis via de novo pathway; 5-amino-1-(5-phospho-D-ribosyl)imidazole from N(2)-formyl-N(1)-(5-phospho-D-ribosyl)glycinamide: step 1/2. Part of the phosphoribosylformylglycinamidine synthase complex involved in the purines biosynthetic pathway. Catalyzes the ATP-dependent conversion of formylglycinamide ribonucleotide (FGAR) and glutamine to yield formylglycinamidine ribonucleotide (FGAM) and glutamate. The FGAM synthase complex is composed of three subunits. PurQ produces an ammonia molecule by converting glutamine to glutamate. PurL transfers the ammonia molecule to FGAR to form FGAM in an ATP-dependent manner. PurS interacts with PurQ and PurL and is thought to assist in the transfer of the ammonia molecule from PurQ to PurL. This is Phosphoribosylformylglycinamidine synthase subunit PurL from Methylocella silvestris (strain DSM 15510 / CIP 108128 / LMG 27833 / NCIMB 13906 / BL2).